Here is a 492-residue protein sequence, read N- to C-terminus: Putative sucrose transport protein SUC6 (492 aa).

Residues 1–26 (MSDLQANKDAAAVNRQSSSSSADLNG) form a disordered region. At 1 to 33 (MSDLQANKDAAAVNRQSSSSSADLNGPSPMRKM) the chain is on the cytoplasmic side. The span at 14–23 (NRQSSSSSAD) shows a compositional bias: polar residues. The residue at position 17 (S17) is a Phosphoserine. Residues 34 to 54 (ISVASIAAGIQFGWALQLSLL) form a helical membrane-spanning segment. Over 55–68 (TPYVQLLGVPHKWS) the chain is Extracellular. Residues 69–89 (SFIWLCGPVSGLLVQPSVGYF) traverse the membrane as a helical segment. The Cytoplasmic segment spans residues 90–101 (SDRCKSRFGRRR). A helical transmembrane segment spans residues 102–122 (PFIAMGALLVAVAVVLIGYAA). Residues 123–139 (DFGHSMGDKVDEPVKMR) lie on the Extracellular side of the membrane. A helical membrane pass occupies residues 140–160 (AVVIFALGFWILDVANNTLQG). Residues 161-181 (PCRAFLGDLAAGDAKKTRTAN) are Cytoplasmic-facing. Residues 182–202 (AFFSFFMAVGNVLGYAAGSYT) traverse the membrane as a helical segment. Over 203–224 (NLYKIFPFTMTKACDIYCANLK) the chain is Extracellular. The helical transmembrane segment at 225-245 (SCFFLSITLLLVVTIIALWYV) threads the bilayer. Residues 246–277 (EDKQWSPKADSDNEKTPFFGEIFGAFKVMKRP) lie on the Cytoplasmic side of the membrane. The helical transmembrane segment at 278 to 298 (MWMLLIVTALNWIAWFPFLLY) threads the bilayer. The Extracellular segment spans residues 299 to 324 (DTDWMGREVYGGDSKGDDKMKKLYNQ). Residues 325 to 345 (GIHVGGLGLMLNSIVLGFMSL) traverse the membrane as a helical segment. Residues 346–359 (GIEGISRKMGGAKR) are Cytoplasmic-facing. A helical membrane pass occupies residues 360 to 380 (LWGAVNIILAVCLAMTVLVTK). The Extracellular segment spans residues 381 to 403 (KAEEHRRIAGPMALPTDGIRAGA). A helical transmembrane segment spans residues 404–424 (LTLFALLGIPLAITFSIPFAL). The Cytoplasmic portion of the chain corresponds to 425–446 (ASIISSSSGAGQGLSLGVLNMT). A helical membrane pass occupies residues 447 to 467 (IVIPQMVVSFGVGPIDALFGG). Over 468 to 469 (GN) the chain is Extracellular. The chain crosses the membrane as a helical span at residues 470 to 490 (LPGFVVGAIAAAISSVVAFSV). The Cytoplasmic segment spans residues 491–492 (LP).

The protein belongs to the glycoside-pentoside-hexuronide (GPH) cation symporter transporter (TC 2.A.2.4) family.

Its subcellular location is the cell membrane. It functions in the pathway glycan biosynthesis; sucrose metabolism. In terms of biological role, may be responsible for the transport of glucosides into the cell, with the concomitant uptake of protons (symport system). Does not seem to transport sucrose. This is Putative sucrose transport protein SUC6 from Arabidopsis thaliana (Mouse-ear cress).